Consider the following 309-residue polypeptide: tRNA pseudouridine synthase B (309 aa).

Residue Asp39 is the Nucleophile of the active site.

The protein belongs to the pseudouridine synthase TruB family. Type 1 subfamily.

The enzyme catalyses uridine(55) in tRNA = pseudouridine(55) in tRNA. Functionally, responsible for synthesis of pseudouridine from uracil-55 in the psi GC loop of transfer RNAs. This Bacillus velezensis (strain DSM 23117 / BGSC 10A6 / LMG 26770 / FZB42) (Bacillus amyloliquefaciens subsp. plantarum) protein is tRNA pseudouridine synthase B.